A 297-amino-acid polypeptide reads, in one-letter code: Translocase of chloroplast 33, chloroplastic (297 aa).

One can recognise an AIG1-type G domain in the interval 34–258 (MNSMTVLVLG…HVDKKMVDGS (225 aa)). A helical membrane pass occupies residues 37-53 (MTVLVLGKGGVGKSSTV). Residues 46-51 (GVGKSS) and 65-70 (SPFQAE) contribute to the GTP site. Ser-50 and Gln-68 together coordinate Mg(2+). Homodimerization stretches follow at residues 65–68 (SPFQ) and 125–130 (RLDVYR). His-160 serves as a coordination point for GTP. Residue Ser-181 is modified to Phosphoserine. 208 to 209 (EN) contacts GTP.

It belongs to the TRAFAC class TrmE-Era-EngA-EngB-Septin-like GTPase superfamily. AIG1/Toc34/Toc159-like paraseptin GTPase family. TOC34 subfamily. Homodimer, heterodimer with TOC34 and TOC159, and monomer. The homodimerization and the dimerization with TOC159 require the binding of GTP on Arg-130, and a hypothetical coGAP factor. The dimeric form has a higher GTPase activity than the monomeric form. Part of the TOC core complex that includes 1 protein for the specific recognition of transit peptides surrounded by a ring composed of four proteins forming translocation channels, and four to five GTP-binding proteins providing energy. This core complex can interact with components of the TIC complex to form a larger import complex. Chloroplastic protein precursor such as prSS (precursor of the RuBisCO small subunit) interacts with these complexes. The TOC complex contains a specific subset of polar lipids such as digalactosyldiacylglyceride (DGDG), phosphatidylcholine (PC) and phosphatidylglycerol (PG). Interacts at least with TOC75-3. Forms large complexes including TOC33, pPORA and OEP161 during pPORA import into plastids at the plastid envelope membrane. Interacts with SP1. The cofactor is Mg(2+). Phosphorylated by a kinase present in the outer envelope of chloroplast. When Ser-181 is phosphorylated, the binding to preprotein, GTP and GDP is inhibited, and thus, GTPase activity is repressed. As to expression, mostly expressed in seedlings and flowers, and, to a lower extent, in roots, stems, and leaves.

Its subcellular location is the plastid. The protein resides in the chloroplast outer membrane. In terms of biological role, GTPase involved in protein precursor import into chloroplasts. Seems to recognize chloroplast-destined precursor proteins and regulate their presentation to the translocation channel through GTP hydrolysis. Binds GTP, GDP, XTP, but not ATP. Probably specialized in the import of nuclear encoded photosynthetic preproteins from the cytoplasm to the chloroplast, especially during early development stages. The sequence is that of Translocase of chloroplast 33, chloroplastic (TOC33) from Arabidopsis thaliana (Mouse-ear cress).